The sequence spans 291 residues: Probable cell wall amidase LytH (291 aa).

Residues 1–40 (MKKIDSWLTKHGLKNRLTLVVIVIFIIFLILLFMFVNLSD) form the signal peptide. One can recognise an SH3b domain in the interval 41 to 105 (EDTGQITITE…WVAGWHTNLN (65 aa)). Residues 122 to 286 (IVLDPGHGGS…VEQAIVDGLK (165 aa)) form the MurNAc-LAA domain. The disordered stretch occupies residues 123–147 (VLDPGHGGSDQGASSSTPSKSLEKN). The span at 133-142 (QGASSSTPSK) shows a compositional bias: polar residues.

The protein belongs to the N-acetylmuramoyl-L-alanine amidase 3 family.

Its subcellular location is the secreted. Its function is as follows. Probably involved in cell-wall metabolism. This is Probable cell wall amidase LytH (lytH) from Staphylococcus epidermidis (strain ATCC 35984 / DSM 28319 / BCRC 17069 / CCUG 31568 / BM 3577 / RP62A).